The following is a 332-amino-acid chain: Glycerol-3-phosphate dehydrogenase [NAD(P)+] (332 aa).

NADPH contacts are provided by tryptophan 11, arginine 30, and lysine 108. Sn-glycerol 3-phosphate is bound by residues lysine 108, glycine 137, and serine 139. Alanine 141 contacts NADPH. Residues lysine 192, aspartate 245, serine 255, arginine 256, and asparagine 257 each contribute to the sn-glycerol 3-phosphate site. Lysine 192 acts as the Proton acceptor in catalysis. NADPH is bound at residue arginine 256. Valine 280 and glutamate 282 together coordinate NADPH.

Belongs to the NAD-dependent glycerol-3-phosphate dehydrogenase family.

It localises to the cytoplasm. It catalyses the reaction sn-glycerol 3-phosphate + NAD(+) = dihydroxyacetone phosphate + NADH + H(+). The catalysed reaction is sn-glycerol 3-phosphate + NADP(+) = dihydroxyacetone phosphate + NADPH + H(+). It participates in membrane lipid metabolism; glycerophospholipid metabolism. Functionally, catalyzes the reduction of the glycolytic intermediate dihydroxyacetone phosphate (DHAP) to sn-glycerol 3-phosphate (G3P), the key precursor for phospholipid synthesis. This Burkholderia thailandensis (strain ATCC 700388 / DSM 13276 / CCUG 48851 / CIP 106301 / E264) protein is Glycerol-3-phosphate dehydrogenase [NAD(P)+].